A 545-amino-acid chain; its full sequence is GMP synthase [glutamine-hydrolyzing] (545 aa).

Positions 17 to 211 (TVLVLDMGSQ…ATKICGARPD (195 aa)) constitute a Glutamine amidotransferase type-1 domain. Cys93 serves as the catalytic Nucleophile. Residues His185 and Glu187 contribute to the active site. Residues 212–420 (WKMDDFSARE…LGIHEELIGR (209 aa)) form the GMPS ATP-PPase domain. An ATP-binding site is contributed by 240–246 (SGGVDST). 4 residues coordinate XMP: Arg313, Asp482, Lys537, and Glu543.

As to quaternary structure, homodimer. It depends on Mg(2+) as a cofactor.

The protein localises to the cytoplasm. The protein resides in the cytosol. It carries out the reaction XMP + L-glutamine + ATP + H2O = GMP + L-glutamate + AMP + diphosphate + 2 H(+). Its pathway is purine metabolism; GMP biosynthesis; GMP from XMP (L-Gln route): step 1/1. Its function is as follows. Catalyzes the conversion of xanthine monophosphate (XMP) to GMP in the presence of glutamine and ATP through an adenyl-XMP intermediate. This is GMP synthase [glutamine-hydrolyzing] (GUA1) from Gibberella zeae (strain ATCC MYA-4620 / CBS 123657 / FGSC 9075 / NRRL 31084 / PH-1) (Wheat head blight fungus).